A 362-amino-acid chain; its full sequence is Exopolygalacturonase (362 aa).

4 PbH1 repeats span residues 138-164 (CKNL…HIGR), 165-186 (SDGV…SLGD), 188-208 (SKNI…SVGS), and 218-239 (VVGI…RIKT). Asn-140 is a glycosylation site (N-linked (GlcNAc...) asparagine). Asp-179 (proton donor) is an active-site residue. 2 N-linked (GlcNAc...) asparagine glycosylation sites follow: Asn-192 and Asn-195. The active site involves His-202. N-linked (GlcNAc...) asparagine glycosylation occurs at Asn-225.

The protein belongs to the glycosyl hydrolase 28 family. In terms of tissue distribution, pollen tubes growing through the style during pollination.

It is found in the secreted. It localises to the cell wall. It carries out the reaction [(1-&gt;4)-alpha-D-galacturonosyl](n) + H2O = alpha-D-galacturonate + [(1-&gt;4)-alpha-D-galacturonosyl](n-1). Its function is as follows. May function in depolymerizing pectin during pollen development, germination, and tube growth. Acts as an exo-polygalacturonase. The protein is Exopolygalacturonase of Oenothera organensis (Evening primrose).